The primary structure comprises 279 residues: Odontogenic ameloblast-associated protein (279 aa).

Positions 1-15 (MKIIILLGFLGATLS) are cleaved as a signal peptide. Low complexity predominate over residues 100 to 123 (AQGAQAGQVDPSQAQTPPQTQPGP). The interval 100 to 125 (AQGAQAGQVDPSQAQTPPQTQPGPNH) is disordered. Residues Thr-115 and Thr-119 are each glycosylated (O-linked (GalNAc...) threonine). Residues 127–129 (MPY) are interaction with ARHGEF5. 6 O-linked (GalNAc...) threonine glycosylation sites follow: Thr-168, Thr-244, Thr-250, Thr-251, Thr-255, and Thr-273.

Belongs to the ODAM family. Interacts (via C-terminus) with ARHGEF5. In terms of processing, O-glycosylated.

Its subcellular location is the secreted. The protein localises to the cytoplasm. The protein resides in the nucleus. Its function is as follows. Tooth-associated epithelia protein that probably plays a role in odontogenesis, the complex process that results in the initiation and generation of the tooth. May be incorporated in the enamel matrix at the end of mineralization process. Involved in the induction of RHOA activity via interaction with ARHGEF and expression of downstream factors such as ROCK. Plays a role in attachment of the junctional epithelium to the tooth surface. The protein is Odontogenic ameloblast-associated protein (ODAM) of Macaca mulatta (Rhesus macaque).